Here is a 196-residue protein sequence, read N- to C-terminus: Zinc finger C2H2 protein ECU03_0940 (196 aa).

2 C2H2-type zinc fingers span residues 130–155 and 166–191; these read YACE…KEGH and YVCP…KHYH.

In Encephalitozoon cuniculi (strain GB-M1) (Microsporidian parasite), this protein is Zinc finger C2H2 protein ECU03_0940.